The following is a 339-amino-acid chain: UDP-N-acetylglucosamine--N-acetylmuramyl-(pentapeptide) pyrophosphoryl-undecaprenol N-acetylglucosamine transferase (339 aa).

UDP-N-acetyl-alpha-D-glucosamine contacts are provided by residues 10 to 12, N124, R168, S188, I235, and Q280; that span reads TGG.

It belongs to the glycosyltransferase 28 family. MurG subfamily.

It is found in the cell inner membrane. The catalysed reaction is di-trans,octa-cis-undecaprenyl diphospho-N-acetyl-alpha-D-muramoyl-L-alanyl-D-glutamyl-meso-2,6-diaminopimeloyl-D-alanyl-D-alanine + UDP-N-acetyl-alpha-D-glucosamine = di-trans,octa-cis-undecaprenyl diphospho-[N-acetyl-alpha-D-glucosaminyl-(1-&gt;4)]-N-acetyl-alpha-D-muramoyl-L-alanyl-D-glutamyl-meso-2,6-diaminopimeloyl-D-alanyl-D-alanine + UDP + H(+). Its pathway is cell wall biogenesis; peptidoglycan biosynthesis. In terms of biological role, cell wall formation. Catalyzes the transfer of a GlcNAc subunit on undecaprenyl-pyrophosphoryl-MurNAc-pentapeptide (lipid intermediate I) to form undecaprenyl-pyrophosphoryl-MurNAc-(pentapeptide)GlcNAc (lipid intermediate II). The sequence is that of UDP-N-acetylglucosamine--N-acetylmuramyl-(pentapeptide) pyrophosphoryl-undecaprenol N-acetylglucosamine transferase from Pseudothermotoga lettingae (strain ATCC BAA-301 / DSM 14385 / NBRC 107922 / TMO) (Thermotoga lettingae).